A 341-amino-acid polypeptide reads, in one-letter code: UDP-N-acetylenolpyruvoylglucosamine reductase (341 aa).

The FAD-binding PCMH-type domain maps to 15-185; sequence VTQSCLSLIE…TAVGLRLPKT (171 aa). R161 is an active-site residue. The Proton donor role is filled by S231. Residue E327 is part of the active site.

Belongs to the MurB family. Requires FAD as cofactor.

The protein localises to the cytoplasm. The enzyme catalyses UDP-N-acetyl-alpha-D-muramate + NADP(+) = UDP-N-acetyl-3-O-(1-carboxyvinyl)-alpha-D-glucosamine + NADPH + H(+). It functions in the pathway cell wall biogenesis; peptidoglycan biosynthesis. Cell wall formation. The sequence is that of UDP-N-acetylenolpyruvoylglucosamine reductase from Shewanella oneidensis (strain ATCC 700550 / JCM 31522 / CIP 106686 / LMG 19005 / NCIMB 14063 / MR-1).